Here is a 707-residue protein sequence, read N- to C-terminus: Ribosome biogenesis protein ENP2 (707 aa).

WD repeat units lie at residues 54 to 94 (EFSE…LKFD), 178 to 217 (LDTE…RVSK), 226 to 265 (NRPF…PSII), 269 to 310 (GYGF…AYAS), and 312 to 351 (EPSV…PSPR). The segment at 523 to 707 (LTAAEESDEE…RASKNAFRGM (185 aa)) is disordered. Ser-529 carries the post-translational modification Phosphoserine. The span at 532–544 (ERIAMKDGRGHYD) shows a compositional bias: basic and acidic residues. Over residues 545 to 558 (YEDEESDEEESDDE) the composition is skewed to acidic residues. 2 positions are modified to phosphoserine: Ser-550 and Ser-555. Basic and acidic residues-rich tracts occupy residues 559–598 (TNQK…RFMN), 629–647 (ENGK…RGEA), 659–671 (KDGN…HDNS), and 680–697 (NGNK…ENRR).

This sequence belongs to the WD repeat NOL10/ENP2 family. In terms of assembly, component of the 90S pre-ribosomes.

The protein resides in the nucleus. It is found in the nucleolus. Its function is as follows. May be involved in rRNA-processing and ribosome biosynthesis. The chain is Ribosome biogenesis protein ENP2 (ENP2) from Saccharomyces cerevisiae (strain ATCC 204508 / S288c) (Baker's yeast).